Here is a 256-residue protein sequence, read N- to C-terminus: Late embryogenesis abundant protein 32 (256 aa).

Basic and acidic residues predominate over residues 1–14; it reads MSQEQPRRPREPVK. A disordered region spans residues 1-20; it reads MSQEQPRRPREPVKYGDVFE. Positions 5–9 match the Nuclear localization signal (NLS) motif; the sequence is QPRRP. SMP domains lie at 13-66, 130-187, and 195-253; these read VKYG…TTNI, ITIG…HNAT, and IKLR…LNER.

The protein belongs to the LEA type SMP family. In terms of tissue distribution, embryo specific, only in dry mature seeds. Expressed at low levels.

Its subcellular location is the cytoplasm. It is found in the nucleus. Functionally, LEA proteins are late embryonic proteins abundant in higher plant seed embryos. The function of those proteins is not known. The chain is Late embryogenesis abundant protein 32 from Arabidopsis thaliana (Mouse-ear cress).